A 575-amino-acid polypeptide reads, in one-letter code: Cyclic nucleotide-gated channel alpha-4 (575 aa).

Residues 1 to 38 lie on the Cytoplasmic side of the membrane; the sequence is MSQDGKVKTTESTPPAPTKARKWLPVLDPSGDYYYWWL. A helical transmembrane segment spans residues 39 to 60; the sequence is NTMVFPIMYNLIIVVCRACFPD. Over 61–70 the chain is Extracellular; sequence LQHSYLVAWF. The chain crosses the membrane as a helical span at residues 71–91; the sequence is VLDYTSDLLYLLDIGVRFHTG. Topologically, residues 92–116 are cytoplasmic; it reads FLEQGILVVDKGMIASRYVRTWSFL. A helical membrane pass occupies residues 117 to 135; sequence LDLASLVPTDAAYVQLGPH. At 136–140 the chain is on the extracellular side; sequence IPTLR. A helical membrane pass occupies residues 141–159; sequence LNRFLRVPRLFEAFDRTET. Over 160-166 the chain is Cytoplasmic; it reads RTAYPNA. Residues 164–272 are ion conduction pathway; the sequence is PNAFRIAKLM…GSMSSVIYNM (109 aa). Residues 167–190 form a helical membrane-spanning segment; that stretch reads FRIAKLMLYIFVVIHWNSCLYFAL. Topologically, residues 191-213 are extracellular; that stretch reads SRYLGFGRDAWVYPDPAQPGFER. 2 consecutive transmembrane segments (helical) span residues 214 to 248 and 249 to 273; these read LRRQYLYSFYFSTLILTTVGDTPLPDREEEYLFMV and GDFLLAVMGFATIMGSMSSVIYNMN. A selectivity filter region spans residues 231-234; it reads TVGD. The segment at 274–350 is C-linker; it reads TADAAFYPDH…STLSRVQIFQ (77 aa). Residues 274-575 are Cytoplasmic-facing; the sequence is TADAAFYPDH…AGQAGPSGIE (302 aa). The IQ-type motif lies at 292-302; sequence LQHVNKRLERR. Position 348-471 (348-471) interacts with a nucleoside 3',5'-cyclic phosphate; sequence IFQNCEASLL…AVMEEKGREI (124 aa). A cyclic nucleotide-binding domain region spans residues 354 to 474; that stretch reads ASLLEELVLK…EEKGREILLK (121 aa). 3',5'-cyclic GMP-binding residues include G414, S417, R430, and T431. 3',5'-cyclic AMP-binding residues include R430 and T431. The stretch at 493 to 547 forms a coiled coil; sequence TESRLKGLDQQLDDLQTKFARLLAELESSALKIAYRIERLEWQTREWPMPEDMGE. Residues 537–575 are disordered; the sequence is REWPMPEDMGEADDEAEPGEGTSKDGEGKAGQAGPSGIE. The span at 544–554 shows a compositional bias: acidic residues; sequence DMGEADDEAEP.

The protein belongs to the cyclic nucleotide-gated cation channel (TC 1.A.1.5) family. CNGA4 subfamily. In terms of assembly, the olfactory cyclic nucleotide-gated channel is an heterotetramer composed of CNGA2, CNGA4 and CNGB1b subunits with 2:1:1 stoichiometry. May form homomeric channels gated by nitric oxide. In terms of processing, N-glycosylated. In terms of tissue distribution, olfactory neurons. Expressed in olfactory sensory cilia (at protein level).

It is found in the cell projection. The protein localises to the cilium membrane. It carries out the reaction Ca(2+)(in) = Ca(2+)(out). The catalysed reaction is Na(+)(in) = Na(+)(out). It catalyses the reaction K(+)(in) = K(+)(out). The enzyme catalyses NH4(+)(in) = NH4(+)(out). It carries out the reaction Rb(+)(in) = Rb(+)(out). The catalysed reaction is Li(+)(in) = Li(+)(out). It catalyses the reaction Cs(+)(in) = Cs(+)(out). With respect to regulation, ca(2+)-calmodulin exerts its inhibitory effect in cAMP sensitivity by binding to IQ-like motif of CNGA4 and preferably binds to the channel in the closed state. Inhibition by PIP3 of the CNG channel probably occurs via CGNA2 binding. Ca(2+) currents are inhibited by pimozide, an L-type Ca(2+) channel blocker. Functionally, pore-forming subunit of the olfactory cyclic nucleotide-gated channel. Operates in the cilia of olfactory sensory neurons where chemical stimulation of the odorant is converted to an electrical signal. Mediates odorant-induced cAMP-dependent Ca(2+) influx triggering neuron depolarization. The rise of intracellular Ca(2+) levels potentiates the olfactory response by activating Ca(2+)-dependent Cl(-) channels, but it also serves as a negative feedback signal to desensitize the channel for rapid adaptation to odorants. Conducts cAMP- and cGMP-gated ion currents, with permeability for monovalent and divalent cations. May conduct nitric oxide-gated Ca(2+) currents relevant to neurons of vomeronasal organ, a system involved in the perception of pheromones. This Rattus norvegicus (Rat) protein is Cyclic nucleotide-gated channel alpha-4.